We begin with the raw amino-acid sequence, 149 residues long: VapC ribonuclease PF0355 (149 aa).

Residues 8–122 (TFDSLALIKM…ITDDSKRYEP (115 aa)) enclose the PINc domain. The Mg(2+) site is built by Asp-10 and Asp-98.

It belongs to the PINc/VapC protein family. Requires Mg(2+) as cofactor.

Functionally, toxic component of a type II toxin-antitoxin (TA) system. An RNase. This is VapC ribonuclease PF0355 from Pyrococcus furiosus (strain ATCC 43587 / DSM 3638 / JCM 8422 / Vc1).